The following is a 338-amino-acid chain: Glycerol-3-phosphate dehydrogenase [NAD(P)+] (338 aa).

Residues Ser13, Trp14, and Lys108 each contribute to the NADPH site. Sn-glycerol 3-phosphate is bound by residues Lys108, Gly139, and Ser141. An NADPH-binding site is contributed by Ala143. Sn-glycerol 3-phosphate contacts are provided by Lys194, Asp247, Ser257, Arg258, and Asn259. The active-site Proton acceptor is Lys194. Position 258 (Arg258) interacts with NADPH. The NADPH site is built by Val282 and Glu284.

Belongs to the NAD-dependent glycerol-3-phosphate dehydrogenase family.

The protein localises to the cytoplasm. The enzyme catalyses sn-glycerol 3-phosphate + NAD(+) = dihydroxyacetone phosphate + NADH + H(+). It carries out the reaction sn-glycerol 3-phosphate + NADP(+) = dihydroxyacetone phosphate + NADPH + H(+). It participates in membrane lipid metabolism; glycerophospholipid metabolism. Catalyzes the reduction of the glycolytic intermediate dihydroxyacetone phosphate (DHAP) to sn-glycerol 3-phosphate (G3P), the key precursor for phospholipid synthesis. The protein is Glycerol-3-phosphate dehydrogenase [NAD(P)+] of Streptococcus uberis (strain ATCC BAA-854 / 0140J).